Consider the following 76-residue polypeptide: Exodeoxyribonuclease 7 small subunit (76 aa).

This sequence belongs to the XseB family. In terms of assembly, heterooligomer composed of large and small subunits.

The protein resides in the cytoplasm. It carries out the reaction Exonucleolytic cleavage in either 5'- to 3'- or 3'- to 5'-direction to yield nucleoside 5'-phosphates.. Its function is as follows. Bidirectionally degrades single-stranded DNA into large acid-insoluble oligonucleotides, which are then degraded further into small acid-soluble oligonucleotides. This Lactiplantibacillus plantarum (strain ATCC BAA-793 / NCIMB 8826 / WCFS1) (Lactobacillus plantarum) protein is Exodeoxyribonuclease 7 small subunit.